Here is a 549-residue protein sequence, read N- to C-terminus: Probable protein kinase UbiB (549 aa).

Positions 123 to 501 constitute a Protein kinase domain; the sequence is DFNEIPLASA…QQQAHKSNYL (379 aa). ATP contacts are provided by residues 129-137 and lysine 152; that span reads LASASISQV. The active-site Proton acceptor is the aspartate 287. Transmembrane regions (helical) follow at residues 496 to 516 and 520 to 540; these read HKSNYLLITSAVLLICGTLLI and ATLWTPYVCLVSGIILWFVGW.

This sequence belongs to the ABC1 family. UbiB subfamily.

It localises to the cell inner membrane. It functions in the pathway cofactor biosynthesis; ubiquinone biosynthesis [regulation]. In terms of biological role, is probably a protein kinase regulator of UbiI activity which is involved in aerobic coenzyme Q (ubiquinone) biosynthesis. The sequence is that of Probable protein kinase UbiB from Shewanella baltica (strain OS223).